We begin with the raw amino-acid sequence, 107 residues long: MKIKKGDTVQVITGKDKGKQGKVIAAYPRDERVLVEGVNRVKKHTKAGPTAGGSQAGGIVTTEAPIHVSNVQLVVEKDGNKVVTRVGYRFDDEGNKIRVAKRTGEDI.

The protein belongs to the universal ribosomal protein uL24 family. In terms of assembly, part of the 50S ribosomal subunit.

Its function is as follows. One of two assembly initiator proteins, it binds directly to the 5'-end of the 23S rRNA, where it nucleates assembly of the 50S subunit. One of the proteins that surrounds the polypeptide exit tunnel on the outside of the subunit. This is Large ribosomal subunit protein uL24 from Streptomyces avermitilis (strain ATCC 31267 / DSM 46492 / JCM 5070 / NBRC 14893 / NCIMB 12804 / NRRL 8165 / MA-4680).